The primary structure comprises 368 residues: tRNA-specific 2-thiouridylase MnmA (368 aa).

ATP is bound by residues A23–S30 and L49. C110 serves as the catalytic Nucleophile. The cysteines at positions 110 and 209 are disulfide-linked. G135 contributes to the ATP binding site. The interaction with tRNA stretch occupies residues K159–Q161. Residue C209 is the Cysteine persulfide intermediate of the active site. The segment at R314–Y315 is interaction with tRNA.

The protein belongs to the MnmA/TRMU family.

The protein resides in the cytoplasm. It catalyses the reaction S-sulfanyl-L-cysteinyl-[protein] + uridine(34) in tRNA + AH2 + ATP = 2-thiouridine(34) in tRNA + L-cysteinyl-[protein] + A + AMP + diphosphate + H(+). In terms of biological role, catalyzes the 2-thiolation of uridine at the wobble position (U34) of tRNA, leading to the formation of s(2)U34. The sequence is that of tRNA-specific 2-thiouridylase MnmA from Synechococcus sp. (strain JA-2-3B'a(2-13)) (Cyanobacteria bacterium Yellowstone B-Prime).